A 510-amino-acid chain; its full sequence is Facilitated glucose transporter protein 1 (510 aa).

Residues 1–29 (MSEKSRSDTSATASLSDSSKSPSSYSTPG) form a disordered region. At 1-46 (MSEKSRSDTSATASLSDSSKSPSSYSTPGTTTQKIIFPDGKLTKCL) the chain is on the cytoplasmic side. The segment covering 8–29 (DTSATASLSDSSKSPSSYSTPG) has biased composition (low complexity). A helical transmembrane segment spans residues 47–67 (AFSAFVITLASFQFGYHIGCV). Residues 68 to 100 (NAPGGLITEWIIGSHKDLFDKELSRENADLAWS) are Extracellular-facing. The chain crosses the membrane as a helical span at residues 101–121 (VAVSVFAVGGMIGGLSSGWLA). Over 122–127 (DKVGRR) the chain is Cytoplasmic. The chain crosses the membrane as a helical span at residues 128–146 (GALFYNNLLALAAAALMGL). At 147 to 160 (AKSVGAYPMVILGR) the chain is on the extracellular side. A helical membrane pass occupies residues 161 to 181 (LIIGLNCGFSSALVPMFLTEI). Over 182-195 (SPNNLRGMLGSLHQ) the chain is Cytoplasmic. Gln-195 contacts D-glucose. A helical membrane pass occupies residues 196 to 216 (LLVTIAILVSQIFGLPHLLGT). Topologically, residues 217–219 (GDR) are extracellular. A helical transmembrane segment spans residues 220 to 240 (WPLIFAFTVVPAVLQLALLML). The Cytoplasmic segment spans residues 241–299 (CPESPKYTMAVRGQRNEAESALKKLRDTEDVSTEIEAMQEEATAAGVQEKPKMGDMFKG). Residues 300–320 (ALLWPMSIAIMMMLAQQLSGI) form a helical membrane-spanning segment. D-glucose contacts are provided by residues 315-316 (QQ), Asn-321, and Asn-352. Over 321–341 (NVAMFYSTVIFRGAGLTGNEP) the chain is Extracellular. The helical transmembrane segment at 342–362 (FYATIGMGAVNVIMTLISVWL) threads the bilayer. Residues 363-373 (VDHPKFGRRSL) are Cytoplasmic-facing. Residues 374 to 394 (LLAGLTGMFVSTLLLVGALTI) form a helical membrane-spanning segment. Over 395 to 409 (QNSGGDKWASYSAIG) the chain is Extracellular. Residues 410–430 (FVLLFVISFATGPGAIPWFFV) traverse the membrane as a helical segment. Trp-427 contributes to the D-glucose binding site. Over 431–445 (SEIFDSSARGNANSI) the chain is Cytoplasmic. The chain crosses the membrane as a helical span at residues 446–464 (AVMVNWAANLLVGLTFLPI). Residues 465-470 (NNLMQQ) are Extracellular-facing. Residues 471 to 491 (YSFFIFSGFLAFFIFYTWKFV) form a helical membrane-spanning segment. The Cytoplasmic portion of the chain corresponds to 492–510 (PETKGKSIEQIQAEFEKRK).

Belongs to the major facilitator superfamily. Sugar transporter (TC 2.A.1.1) family. Glucose transporter subfamily. In terms of tissue distribution, isoform a is expressed in pharyngeal muscle and intestinal cells in both embryos and adults (at protein level).

Its subcellular location is the cell membrane. The protein resides in the basolateral cell membrane. In terms of biological role, facilitative glucose transporter that plays a role in glucose metabolism and regulation of longevity. May also play a role in lipid metabolism. Glucose transport activity of isoform a is competitively inhibited by mannose, galactose and fructose, suggesting ability to transport also other hexose sugars. The polypeptide is Facilitated glucose transporter protein 1 (Caenorhabditis elegans).